The chain runs to 1149 residues: MGKRDIPSPNENIAPRTIGMRDVDLTAAPAKKAKLDTGERIAVSGRVASVKLTNFMCHANLQIDFKTAQNNCFYIGGPNGSGKSALFAAINLGLGGRGSDNDRGNTVKSYIKDGTTQSKITITLTNAGLNAHPDFDDLISIERTINQASSTYIMKSVKVTSSDNHVERIVSRKKADVDRIVSRFSIHLSNPAFWMSQDRSRSFLANFKPANVYKLYLESTNLENIRLSYIRFADALDECFALIQLKAGEILNEQKKLKRMQEQRDLQAKLDQDRALVASFCWKLLFCKVRDYNDQIELTLKKQEAQKTLQDETKKEYAKNRAARTEVEKKIQEFRDEVEVQDAEIAEAREDLDAKKRKVLEFEEKIRECEQSIRKKTSEKKYMERTIVNAKNEVRILLEKQGNQDLTKRLTKVENDYKDISQQRENMELGGESAKLREKLDTVITDYKRKEEEKYTIQRDINQLRRKIEQDMETMRRSRATKKDAINKFGSHMAEILMEINRSKSRFQTVPKGPLGKYITLIDPKWAFTVEECIGNLANNFLCSSHLDAEILRNIFQSLRIPAQDRPTIIVAKCNGRAYTNLHEPSSDFKSIYRVLKFSDPDVHNVIIDKSNCEQFILIEDKTEAMELMGSNYPPQNAVKAYTLDGSQAYANGPNSQYRFYSGRGGHARGTFGNDQGDVDEGALARLIEDTKSEAMRLETQDLRKQDHELKVIYNERDQTKAAIDEFDRKLSNLRSQELQKERQAKDLRAELAQTANEDQVENLNESIEEMQKKIPLIEDEVKDILKNVADITADMAPVIQERKEAEHTLAEIQKETRDFASKSQKLQNELSKYDDAGEILKIRLDKVKADEGVFFHTEAKLKSERDDAMEMVENDKKNHPMPPGETDPPDLSSFPSTTEAQRKIEEMQKAVDRATVGCDTTITLECVKDFKDKLKRLKYLCRMIEDVLIELKNLHAARVKAYPSLKKFTELKVCNKFQELLAVRGHFIGGLEFDHEKETLNVNVQSSKEKDAMAGRRPEVLEVEEVDEHSYDDDSDDSTGPRRKKSKKSGQKKKRVRDLKGLSGGERSFVTAALVMSLWEVMEQPFRMMDEFDVFMDMMNRKLVMDLLVELATKKFPHNQFIFFTPQGIKELNMVDGLQVFEMNRVRD.

77–84 (GPNGSGKS) is an ATP binding site. A coiled-coil region spans residues 309–460 (LQDETKKEYA…EEEKYTIQRD (152 aa)). Residues 461 to 687 (INQLRRKIEQ…DVDEGALARL (227 aa)) form a flexible hinge region. The stretch at 714–920 (YNERDQTKAA…AVDRATVGCD (207 aa)) forms a coiled coil. 2 disordered regions span residues 875–900 (NDKK…STTE) and 1026–1060 (EVDE…VRDL). The segment covering 1026 to 1038 (EVDEHSYDDDSDD) has biased composition (acidic residues). The segment covering 1042-1058 (PRRKKSKKSGQKKKRVR) has biased composition (basic residues).

The protein belongs to the SMC family. SMC6 subfamily. Interacts with smc-5. In terms of tissue distribution, expressed in the germline (at protein level).

The protein localises to the nucleus. Its subcellular location is the chromosome. Its function is as follows. Core component of the smc-5/smc-6 complex. Involved in DNA double-strand break repair by promoting sister-chromatid homologous recombination during meiosis. Also plays a role in the DNA damage repair of ultraviolet (UV) radiation-induced DNA lesions. Promotes efficient DNA replication. This Caenorhabditis elegans protein is Structural maintenance of chromosomes protein 6 homolog smc-6.